A 218-amino-acid polypeptide reads, in one-letter code: Ribose-5-phosphate isomerase A (218 aa).

Substrate contacts are provided by residues Lys-7, 28–31 (TGST), 81–84 (DGAD), and 94–97 (KGGG). Catalysis depends on Glu-103, which acts as the Proton acceptor. Lys-121 lines the substrate pocket.

The protein belongs to the ribose 5-phosphate isomerase family. As to quaternary structure, homodimer.

The catalysed reaction is aldehydo-D-ribose 5-phosphate = D-ribulose 5-phosphate. It functions in the pathway carbohydrate degradation; pentose phosphate pathway; D-ribose 5-phosphate from D-ribulose 5-phosphate (non-oxidative stage): step 1/1. Functionally, catalyzes the reversible conversion of ribose-5-phosphate to ribulose 5-phosphate. This is Ribose-5-phosphate isomerase A from Vibrio vulnificus (strain YJ016).